The chain runs to 372 residues: Septin-1 (372 aa).

In terms of domain architecture, Septin-type G spans 27-301 (KGFDFTLMVA…EGYRARCLQS (275 aa)). A G1 motif region spans residues 37–44 (GESGLGKS). Residues 37 to 44 (GESGLGKS), Thr71, Gly97, and 176 to 184 (KADALMPQE) contribute to the GTP site. Residues 94-97 (DTPG) form a G3 motif region. The segment at 175 to 178 (GKAD) is G4 motif. Ser211 is modified (phosphoserine). Positions 234 and 250 each coordinate GTP. Ser253 is modified (phosphoserine; by AURKB). The residue at position 256 (Thr256) is a Phosphothreonine. Phosphoserine; by AURKB is present on residues Ser312 and Ser320. Positions 352-372 (LEKMQAQMQQSQAQGEQSDAL) are disordered. Over residues 355 to 372 (MQAQMQQSQAQGEQSDAL) the composition is skewed to low complexity.

It belongs to the TRAFAC class TrmE-Era-EngA-EngB-Septin-like GTPase superfamily. Septin GTPase family. Septins polymerize into heterooligomeric protein complexes that form filaments, and can associate with cellular membranes, actin filaments and microtubules. GTPase activity is required for filament formation. Interacts with AURKB. In terms of tissue distribution, expressed at high levels in lymphoid and hematopoietic tissues.

It is found in the cytoplasm. Its subcellular location is the cytoskeleton. The protein resides in the microtubule organizing center. It localises to the centrosome. The protein localises to the midbody. Its function is as follows. Filament-forming cytoskeletal GTPase. May play a role in cytokinesis (Potential). The polypeptide is Septin-1 (Homo sapiens (Human)).